The following is a 262-amino-acid chain: Type III pantothenate kinase (262 aa).

An ATP-binding site is contributed by 6–13 (DVGNTNAV). Residues Tyr-100 and 107–110 (GADR) each bind substrate. The active-site Proton acceptor is the Asp-109. Position 129 (Asp-129) interacts with K(+). Thr-132 contacts ATP. Thr-184 contacts substrate.

The protein belongs to the type III pantothenate kinase family. Homodimer. Requires NH4(+) as cofactor. K(+) is required as a cofactor.

The protein localises to the cytoplasm. The enzyme catalyses (R)-pantothenate + ATP = (R)-4'-phosphopantothenate + ADP + H(+). It participates in cofactor biosynthesis; coenzyme A biosynthesis; CoA from (R)-pantothenate: step 1/5. In terms of biological role, catalyzes the phosphorylation of pantothenate (Pan), the first step in CoA biosynthesis. The polypeptide is Type III pantothenate kinase (Bacillus cereus (strain B4264)).